Here is a 361-residue protein sequence, read N- to C-terminus: Peptide chain release factor 1 (361 aa).

An N5-methylglutamine modification is found at Gln235.

The protein belongs to the prokaryotic/mitochondrial release factor family. Post-translationally, methylated by PrmC. Methylation increases the termination efficiency of RF1.

The protein resides in the cytoplasm. Peptide chain release factor 1 directs the termination of translation in response to the peptide chain termination codons UAG and UAA. The polypeptide is Peptide chain release factor 1 (Xanthomonas campestris pv. campestris (strain 8004)).